The primary structure comprises 287 residues: Phosphatidylserine decarboxylase proenzyme (287 aa).

Catalysis depends on charge relay system; for autoendoproteolytic cleavage activity residues aspartate 89, histidine 146, and serine 252. The active-site Schiff-base intermediate with substrate; via pyruvic acid; for decarboxylase activity is the serine 252. Serine 252 bears the Pyruvic acid (Ser); by autocatalysis mark.

The protein belongs to the phosphatidylserine decarboxylase family. PSD-B subfamily. Prokaryotic type I sub-subfamily. In terms of assembly, heterodimer of a large membrane-associated beta subunit and a small pyruvoyl-containing alpha subunit. Pyruvate serves as cofactor. Is synthesized initially as an inactive proenzyme. Formation of the active enzyme involves a self-maturation process in which the active site pyruvoyl group is generated from an internal serine residue via an autocatalytic post-translational modification. Two non-identical subunits are generated from the proenzyme in this reaction, and the pyruvate is formed at the N-terminus of the alpha chain, which is derived from the carboxyl end of the proenzyme. The autoendoproteolytic cleavage occurs by a canonical serine protease mechanism, in which the side chain hydroxyl group of the serine supplies its oxygen atom to form the C-terminus of the beta chain, while the remainder of the serine residue undergoes an oxidative deamination to produce ammonia and the pyruvoyl prosthetic group on the alpha chain. During this reaction, the Ser that is part of the protease active site of the proenzyme becomes the pyruvoyl prosthetic group, which constitutes an essential element of the active site of the mature decarboxylase.

It is found in the cell membrane. The enzyme catalyses a 1,2-diacyl-sn-glycero-3-phospho-L-serine + H(+) = a 1,2-diacyl-sn-glycero-3-phosphoethanolamine + CO2. It functions in the pathway phospholipid metabolism; phosphatidylethanolamine biosynthesis; phosphatidylethanolamine from CDP-diacylglycerol: step 2/2. Functionally, catalyzes the formation of phosphatidylethanolamine (PtdEtn) from phosphatidylserine (PtdSer). This chain is Phosphatidylserine decarboxylase proenzyme, found in Shewanella pealeana (strain ATCC 700345 / ANG-SQ1).